Here is an 81-residue protein sequence, read N- to C-terminus: Photosystem I iron-sulfur center (81 aa).

4Fe-4S ferredoxin-type domains lie at 2–31 (SHSVKIYDTCIGCTQCVRACPTDVLEMIPW) and 39–68 (IASAPRTEDCVGCKRCESACPTDFLSVRVY). [4Fe-4S] cluster is bound by residues C11, C14, C17, C21, C48, C51, C54, and C58.

The eukaryotic PSI reaction center is composed of at least 11 subunits. [4Fe-4S] cluster is required as a cofactor.

The protein localises to the plastid. It is found in the chloroplast thylakoid membrane. It catalyses the reaction reduced [plastocyanin] + hnu + oxidized [2Fe-2S]-[ferredoxin] = oxidized [plastocyanin] + reduced [2Fe-2S]-[ferredoxin]. Apoprotein for the two 4Fe-4S centers FA and FB of photosystem I (PSI); essential for photochemical activity. FB is the terminal electron acceptor of PSI, donating electrons to ferredoxin. The C-terminus interacts with PsaA/B/D and helps assemble the protein into the PSI complex. Required for binding of PsaD and PsaE to PSI. PSI is a plastocyanin-ferredoxin oxidoreductase, converting photonic excitation into a charge separation, which transfers an electron from the donor P700 chlorophyll pair to the spectroscopically characterized acceptors A0, A1, FX, FA and FB in turn. This Phaseolus vulgaris (Kidney bean) protein is Photosystem I iron-sulfur center.